The sequence spans 1341 residues: uncharacterized protein (1341 aa).

A DNA-binding region (zn(2)-C6 fungal-type) is located at residues 41-68 (CLLCRRRKQRCDHKLPSCTACLKAGIKC). Low complexity-rich tracts occupy residues 72–93 (SKYS…AGTV), 779–791 (SNSA…SNSN), 864–906 (SNSS…NDNN), 920–967 (NHNN…GNNS), and 1036–1050 (SPSK…SSHS). 4 disordered regions span residues 72-100 (SKYS…PHPV), 770-804 (ISSG…MPPA), 864-971 (SNSS…QYVR), and 1031-1116 (TMTN…NSNP). Residues 1057 to 1076 (MTQSPTPYPQTSNMLPQQHV) are compositionally biased toward polar residues. Residues 1078–1090 (RPLPQQQREQPQQ) show a composition bias toward low complexity. Residues 1091–1116 (HITSPQRFSESNFTNQLNNGMINSNP) show a composition bias toward polar residues. The residue at position 1143 (Ser1143) is a Phosphoserine. The span at 1220–1230 (SQEPSSLSMDK) shows a compositional bias: polar residues. The disordered stretch occupies residues 1220–1240 (SQEPSSLSMDKQQQQHQQQNM).

It is found in the nucleus. This is an uncharacterized protein from Saccharomyces cerevisiae (strain ATCC 204508 / S288c) (Baker's yeast).